Here is a 238-residue protein sequence, read N- to C-terminus: UPF0758 protein Ajs_3450 (238 aa).

Residues 116 to 238 (VFDSPQAVQH…ALSMAEQGLV (123 aa)) form the MPN domain. Residues histidine 187, histidine 189, and aspartate 200 each contribute to the Zn(2+) site. The JAMM motif motif lies at 187–200 (HNHPSGSVQPSRAD).

The protein belongs to the UPF0758 family.

In Acidovorax sp. (strain JS42), this protein is UPF0758 protein Ajs_3450.